The following is a 1651-amino-acid chain: Alsin (1651 aa).

RCC1 repeat units follow at residues 59–108 (DGEV…AVTE), 109–167 (SGVV…ALSI), and 169–218 (REIW…ALVQ). Positions 444–476 (REEQVKQESLQGKKSSSLMDIREEESEGGSRRL) are disordered. Polar residues predominate over residues 450-461 (QESLQGKKSSSL). Phosphoserine is present on residues S459, S460, S477, and S486. T504 carries the post-translational modification Phosphothreonine. RCC1 repeat units follow at residues 519 to 570 (RTEV…ALTA) and 572 to 621 (SQVY…FLVD). N6-acetyllysine is present on K527. One can recognise a DH domain in the interval 684–879 (GYIASLHELA…ESLALHLGKK (196 aa)). The PH domain maps to 895 to 1001 (GKMTDSLRKP…RAISQAVDQA (107 aa)). MORN repeat units lie at residues 1043–1065 (YDGRWLSGKPHGRGVLKWPDGKV), 1066–1088 (YSGTFRNGLEDGYGEYRIPNKAL), 1094–1116 (YVGHWKEGKMCGQGVYSYASGEV), 1117–1139 (FEGCFQDNMRHGHGLLRSGKLTS), 1145–1167 (FIGQWVMDKKAGYGVFDDITRGE), 1169–1191 (YMGMWQDDACQGNGVVVTQFGLY), 1192–1214 (YEGNFHLNKMMGNGVLLSEDDTI), and 1215–1238 (YEGEFSDDWTLCGKGTLTMPNGDY). The residue at position 1329 (S1329) is a Phosphoserine. A VPS9 domain is found at 1507 to 1651 (KQPDIALLGF…YYQIQREKLN (145 aa)).

In terms of assembly, forms a heteromeric complex with ALS2CL. Interacts with ALS2CL.

Its function is as follows. May act as a GTPase regulator. Controls survival and growth of spinal motoneurons. The polypeptide is Alsin (Als2) (Rattus norvegicus (Rat)).